The primary structure comprises 116 residues: Protein Rev (116 aa).

Residues S5 and S8 each carry the phosphoserine; by host CK2 modification. Residues L18 to N26 are homomultimerization. Residues N26–N50 form a disordered region. Positions S34–N50 match the Nuclear localization signal and RNA-binding (RRE) motif. A compositionally biased stretch (basic residues) spans Q36 to A47. The short motif at L73 to D84 is the Nuclear export signal and binding to XPO1 element. Positions N91–E116 are disordered. Residue S92 is modified to Phosphoserine; by host.

The protein belongs to the HIV-1 REV protein family. In terms of assembly, homomultimer; when bound to the RRE. Multimeric assembly is essential for activity and may involve XPO1. Binds to human KPNB1, XPO1, TNPO1, RANBP5 and IPO7. Interacts with the viral Integrase. Interacts with human KHDRBS1. Interacts with human NAP1; this interaction decreases Rev multimerization and stimulates its activity. Interacts with human DEAD-box helicases DDX3 and DDX24; these interactions may serve for viral RNA export to the cytoplasm and packaging, respectively. Interacts with human PSIP1; this interaction may inhibit HIV-1 DNA integration by promoting dissociation of the Integrase-LEDGF/p75 complex. In terms of processing, asymmetrically arginine dimethylated at one site by host PRMT6. Methylation impairs the RNA-binding activity and export of viral RNA from the nucleus to the cytoplasm. Phosphorylated by protein kinase CK2. Presence of, and maybe binding to the N-terminus of the regulatory beta subunit of CK2 is necessary for CK2-mediated Rev's phosphorylation.

Its subcellular location is the host nucleus. It localises to the host nucleolus. It is found in the host cytoplasm. Escorts unspliced or incompletely spliced viral pre-mRNAs (late transcripts) out of the nucleus of infected cells. These pre-mRNAs carry a recognition sequence called Rev responsive element (RRE) located in the env gene, that is not present in fully spliced viral mRNAs (early transcripts). This function is essential since most viral proteins are translated from unspliced or partially spliced pre-mRNAs which cannot exit the nucleus by the pathway used by fully processed cellular mRNAs. Rev itself is translated from a fully spliced mRNA that readily exits the nucleus. Rev's nuclear localization signal (NLS) binds directly to KPNB1/Importin beta-1 without previous binding to KPNA1/Importin alpha-1. KPNB1 binds to the GDP bound form of RAN (Ran-GDP) and targets Rev to the nucleus. In the nucleus, the conversion from Ran-GDP to Ran-GTP dissociates Rev from KPNB1 and allows Rev's binding to the RRE in viral pre-mRNAs. Rev multimerization on the RRE via cooperative assembly exposes its nuclear export signal (NES) to the surface. Rev can then form a complex with XPO1/CRM1 and Ran-GTP, leading to nuclear export of the complex. Conversion from Ran-GTP to Ran-GDP mediates dissociation of the Rev/RRE/XPO1/RAN complex, so that Rev can return to the nucleus for a subsequent round of export. Beside KPNB1, also seems to interact with TNPO1/Transportin-1, RANBP5/IPO5 and IPO7/RANBP7 for nuclear import. The nucleoporin-like HRB/RIP is an essential cofactor that probably indirectly interacts with Rev to release HIV RNAs from the perinuclear region to the cytoplasm. This Homo sapiens (Human) protein is Protein Rev.